Reading from the N-terminus, the 481-residue chain is Deoxyribodipyrimidine photo-lyase (481 aa).

Residues 1 to 136 (MQLFWHRRDL…AHAQFHDAVH (136 aa)) enclose the Photolyase/cryptochrome alpha/beta domain. Tyr-228 contributes to the FAD binding site. Arg-232 is a binding site for DNA. Position 240–244 (240–244 (TSRLS)) interacts with FAD. Interaction with DNA stretches follow at residues 283-290 (QLAWREFY) and 349-350 (NR). Residue 380 to 382 (DHD) participates in FAD binding. Position 412 (Gln-412) interacts with DNA.

It belongs to the DNA photolyase class-1 family. In terms of assembly, monomer. Requires FAD as cofactor. It depends on coenzyme F420-(gamma-Glu)n as a cofactor.

It catalyses the reaction cyclobutadipyrimidine (in DNA) = 2 pyrimidine residues (in DNA).. Involved in repair of UV radiation-induced DNA damage. Catalyzes the light-dependent monomerization (300-600 nm) of cyclobutyl pyrimidine dimers (in cis-syn configuration), which are formed between adjacent bases on the same DNA strand upon exposure to ultraviolet radiation. This is Deoxyribodipyrimidine photo-lyase (phr) from Halobacterium salinarum (strain ATCC 700922 / JCM 11081 / NRC-1) (Halobacterium halobium).